Consider the following 158-residue polypeptide: Transcriptional repressor NrdR (158 aa).

Residues C3 to C34 fold into a zinc finger. The ATP-cone domain maps to L49–D139.

It belongs to the NrdR family. The cofactor is Zn(2+).

In terms of biological role, negatively regulates transcription of bacterial ribonucleotide reductase nrd genes and operons by binding to NrdR-boxes. The chain is Transcriptional repressor NrdR from Brucella abortus (strain S19).